The following is a 91-amino-acid chain: Small ribosomal subunit protein bS18 (91 aa).

Residues 1–21 (MSDERTPQRSSGPRKKRPFQR) are disordered. A compositionally biased stretch (basic residues) spans 12–21 (GPRKKRPFQR).

The protein belongs to the bacterial ribosomal protein bS18 family. Part of the 30S ribosomal subunit. Forms a tight heterodimer with protein bS6.

Binds as a heterodimer with protein bS6 to the central domain of the 16S rRNA, where it helps stabilize the platform of the 30S subunit. In Geotalea uraniireducens (strain Rf4) (Geobacter uraniireducens), this protein is Small ribosomal subunit protein bS18.